The following is a 167-amino-acid chain: NAD(P)H-quinone oxidoreductase subunit I, chloroplastic (167 aa).

4Fe-4S ferredoxin-type domains are found at residues 55 to 84 (GRIH…VDWK) and 95 to 124 (LNYS…MTEE). Residues cysteine 64, cysteine 67, cysteine 70, cysteine 74, cysteine 104, cysteine 107, cysteine 110, and cysteine 114 each coordinate [4Fe-4S] cluster.

The protein belongs to the complex I 23 kDa subunit family. As to quaternary structure, NDH is composed of at least 16 different subunits, 5 of which are encoded in the nucleus. It depends on [4Fe-4S] cluster as a cofactor.

The protein resides in the plastid. Its subcellular location is the chloroplast thylakoid membrane. It carries out the reaction a plastoquinone + NADH + (n+1) H(+)(in) = a plastoquinol + NAD(+) + n H(+)(out). It catalyses the reaction a plastoquinone + NADPH + (n+1) H(+)(in) = a plastoquinol + NADP(+) + n H(+)(out). NDH shuttles electrons from NAD(P)H:plastoquinone, via FMN and iron-sulfur (Fe-S) centers, to quinones in the photosynthetic chain and possibly in a chloroplast respiratory chain. The immediate electron acceptor for the enzyme in this species is believed to be plastoquinone. Couples the redox reaction to proton translocation, and thus conserves the redox energy in a proton gradient. This is NAD(P)H-quinone oxidoreductase subunit I, chloroplastic from Gossypium barbadense (Sea Island cotton).